A 306-amino-acid polypeptide reads, in one-letter code: Protein-methionine-sulfoxide reductase catalytic subunit MsrP (306 aa).

Positions 1 to 44 (MLIRHAPDLTDNDVTGHGLYLRRRDFIGGAAGLGLMAAAGSASA) form a signal peptide, tat-type signal. Mo-molybdopterin contacts are provided by residues Asn69, 72–73 (YE), Cys127, Thr162, Asn210, Arg215, and 226–228 (GIK).

This sequence belongs to the MsrP family. As to quaternary structure, heterodimer of a catalytic subunit (MsrP) and a heme-binding subunit (MsrQ). It depends on Mo-molybdopterin as a cofactor. In terms of processing, predicted to be exported by the Tat system. The position of the signal peptide cleavage has not been experimentally proven.

The protein resides in the periplasm. It catalyses the reaction L-methionyl-[protein] + a quinone + H2O = L-methionyl-(S)-S-oxide-[protein] + a quinol. It carries out the reaction L-methionyl-[protein] + a quinone + H2O = L-methionyl-(R)-S-oxide-[protein] + a quinol. Its function is as follows. Part of the MsrPQ system that repairs oxidized periplasmic proteins containing methionine sulfoxide residues (Met-O), using respiratory chain electrons. Thus protects these proteins from oxidative-stress damage caused by reactive species of oxygen and chlorine generated by the host defense mechanisms. MsrPQ is essential for the maintenance of envelope integrity under bleach stress, rescuing a wide series of structurally unrelated periplasmic proteins from methionine oxidation. The catalytic subunit MsrP is non-stereospecific, being able to reduce both (R-) and (S-) diastereoisomers of methionine sulfoxide. The polypeptide is Protein-methionine-sulfoxide reductase catalytic subunit MsrP (Caulobacter sp. (strain K31)).